We begin with the raw amino-acid sequence, 201 residues long: FMN-dependent NADH:quinone oxidoreductase (201 aa).

FMN contacts are provided by residues 92-95 (MWNL) and 136-139 (STGG).

The protein belongs to the azoreductase type 1 family. Homodimer. FMN serves as cofactor.

The enzyme catalyses 2 a quinone + NADH + H(+) = 2 a 1,4-benzosemiquinone + NAD(+). It carries out the reaction N,N-dimethyl-1,4-phenylenediamine + anthranilate + 2 NAD(+) = 2-(4-dimethylaminophenyl)diazenylbenzoate + 2 NADH + 2 H(+). Its function is as follows. Quinone reductase that provides resistance to thiol-specific stress caused by electrophilic quinones. Also exhibits azoreductase activity. Catalyzes the reductive cleavage of the azo bond in aromatic azo compounds to the corresponding amines. The polypeptide is FMN-dependent NADH:quinone oxidoreductase (Coprothermobacter proteolyticus (strain ATCC 35245 / DSM 5265 / OCM 4 / BT)).